Consider the following 213-residue polypeptide: CASP-like protein UU2 (213 aa).

The tract at residues 1–26 is disordered; it reads MEDPKGAWQSDVFDNGRDFKPHDKAP. Residues 1–53 are Cytoplasmic-facing; sequence MEDPKGAWQSDVFDNGRDFKPHDKAPANVTAGTTPPMYNVGAGGSEGNSKALS. Over residues 14–25 the composition is skewed to basic and acidic residues; it reads DNGRDFKPHDKA. Residues 54 to 74 traverse the membrane as a helical segment; the sequence is IISIVLRCLSIMFNVVSLGVI. Over 75–96 the chain is Extracellular; that stretch reads ASNQGKSYFVVWRTLNSSNMQY. A glycan (N-linked (GlcNAc...) asparagine) is linked at asparagine 90. A helical transmembrane segment spans residues 97–117; that stretch reads LFAINVIVLVYCVVQLILSII. The Cytoplasmic portion of the chain corresponds to 118–137; that stretch reads NLVQGKMVLSGPTQPASTIT. The helical transmembrane segment at 138 to 158 threads the bilayer; that stretch reads YICDQGLTYMLMAGFGAGVAL. Residues 159 to 184 are Extracellular-facing; the sequence is QASVDKGESGMLDCSGANEFCGKNKA. The helical transmembrane segment at 185-205 threads the bilayer; that stretch reads SAALSFLGFVCIALSANLNYL. Over 206–213 the chain is Cytoplasmic; sequence RLYFMAAK.

The protein belongs to the Casparian strip membrane proteins (CASP) family. Homodimer and heterodimers.

The protein resides in the cell membrane. This Physcomitrium patens (Spreading-leaved earth moss) protein is CASP-like protein UU2.